A 34-amino-acid polypeptide reads, in one-letter code: Photosystem II reaction center protein M (34 aa).

A helical membrane pass occupies residues 5 to 25 (ILGLMAVALFILIPTSFLLIL).

Belongs to the PsbM family. PSII is composed of 1 copy each of membrane proteins PsbA, PsbB, PsbC, PsbD, PsbE, PsbF, PsbH, PsbI, PsbJ, PsbK, PsbL, PsbM, PsbT, PsbX, PsbY, PsbZ, Psb30/Ycf12, at least 3 peripheral proteins of the oxygen-evolving complex and a large number of cofactors. It forms dimeric complexes.

It is found in the plastid. The protein resides in the chloroplast thylakoid membrane. Functionally, one of the components of the core complex of photosystem II (PSII). PSII is a light-driven water:plastoquinone oxidoreductase that uses light energy to abstract electrons from H(2)O, generating O(2) and a proton gradient subsequently used for ATP formation. It consists of a core antenna complex that captures photons, and an electron transfer chain that converts photonic excitation into a charge separation. This subunit is found at the monomer-monomer interface. This chain is Photosystem II reaction center protein M, found in Tupiella akineta (Green alga).